The chain runs to 55 residues: UPF0391 membrane protein NE1120 (55 aa).

2 helical membrane-spanning segments follow: residues 4 to 24 (MALV…AGIA) and 27 to 47 (LAWA…VFYL).

The protein belongs to the UPF0391 family.

The protein resides in the cell membrane. The chain is UPF0391 membrane protein NE1120 from Nitrosomonas europaea (strain ATCC 19718 / CIP 103999 / KCTC 2705 / NBRC 14298).